A 468-amino-acid chain; its full sequence is Glutamate--tRNA ligase (468 aa).

The 'HIGH' region motif lies at 10 to 20; that stretch reads PSPTGYLHIGG. The short motif at 252 to 256 is the 'KMSKS' region element; sequence KLSKR. Residue Lys255 coordinates ATP.

This sequence belongs to the class-I aminoacyl-tRNA synthetase family. Glutamate--tRNA ligase type 1 subfamily. In terms of assembly, monomer.

The protein resides in the cytoplasm. It catalyses the reaction tRNA(Glu) + L-glutamate + ATP = L-glutamyl-tRNA(Glu) + AMP + diphosphate. In terms of biological role, catalyzes the attachment of glutamate to tRNA(Glu) in a two-step reaction: glutamate is first activated by ATP to form Glu-AMP and then transferred to the acceptor end of tRNA(Glu). The protein is Glutamate--tRNA ligase of Mycoplasmopsis pulmonis (strain UAB CTIP) (Mycoplasma pulmonis).